The sequence spans 213 residues: Thymidylate kinase (213 aa).

Residue 10–17 coordinates ATP; that stretch reads GLEGAGKT.

Belongs to the thymidylate kinase family.

It catalyses the reaction dTMP + ATP = dTDP + ADP. Functionally, phosphorylation of dTMP to form dTDP in both de novo and salvage pathways of dTTP synthesis. The protein is Thymidylate kinase of Escherichia coli O81 (strain ED1a).